The following is a 118-amino-acid chain: uncharacterized protein (118 aa).

2 helical membrane-spanning segments follow: residues 5–25 and 40–57; these read AFFN…SMVI and FLTF…QHYI.

The protein localises to the membrane. This is an uncharacterized protein from African swine fever virus (strain Badajoz 1971 Vero-adapted) (Ba71V).